The chain runs to 456 residues: tRNA modification GTPase MnmE (456 aa).

Arg-24, Glu-81, and Lys-120 together coordinate (6S)-5-formyl-5,6,7,8-tetrahydrofolate. Residues 216-379 (GMKVVIAGRP…LREHLKECIG (164 aa)) enclose the TrmE-type G domain. Asn-226 contacts K(+). GTP-binding positions include 226–231 (NAGKSS), 245–251 (TAIEGTT), and 270–273 (DTAG). A Mg(2+)-binding site is contributed by Ser-230. Residues Thr-245, Ile-247, and Thr-250 each coordinate K(+). Thr-251 lines the Mg(2+) pocket. Residue Lys-456 coordinates (6S)-5-formyl-5,6,7,8-tetrahydrofolate.

The protein belongs to the TRAFAC class TrmE-Era-EngA-EngB-Septin-like GTPase superfamily. TrmE GTPase family. Homodimer. Heterotetramer of two MnmE and two MnmG subunits. K(+) serves as cofactor.

It is found in the cytoplasm. Exhibits a very high intrinsic GTPase hydrolysis rate. Involved in the addition of a carboxymethylaminomethyl (cmnm) group at the wobble position (U34) of certain tRNAs, forming tRNA-cmnm(5)s(2)U34. In Marinobacter nauticus (strain ATCC 700491 / DSM 11845 / VT8) (Marinobacter aquaeolei), this protein is tRNA modification GTPase MnmE.